The following is a 383-amino-acid chain: Probable protein phosphatase 2C 13 (383 aa).

Residues 78-349 form the PPM-type phosphatase domain; it reads RSGSFADIRS…DNMTVIVICF (272 aa). Residues Asp121, Gly122, Asp297, and Asp340 each contribute to the Mn(2+) site.

Belongs to the PP2C family. Requires Mg(2+) as cofactor. Mn(2+) serves as cofactor.

The catalysed reaction is O-phospho-L-seryl-[protein] + H2O = L-seryl-[protein] + phosphate. It carries out the reaction O-phospho-L-threonyl-[protein] + H2O = L-threonyl-[protein] + phosphate. The sequence is that of Probable protein phosphatase 2C 13 from Arabidopsis thaliana (Mouse-ear cress).